Reading from the N-terminus, the 267-residue chain is Putative glycosyltransferase 63 (267 aa).

It belongs to the glycosyltransferase group 1 family. Glycosyltransferase 4 subfamily.

The protein is Putative glycosyltransferase 63 (SIFV0063) of Sulfolobus islandicus filamentous virus (isolate Iceland/Hveragerdi) (SIFV).